The primary structure comprises 75 residues: Protease B inhibitor 2 (75 aa).

Thr-74 bears the Phosphothreonine mark.

Belongs to the protease inhibitor I9 family. As to quaternary structure, part of the heterodimeric LMA1 complex together with the thioredoxin II/TRX2. LMA1 binds to the ATPase SEC18.

The protein localises to the cytoplasm. Cytosolic inhibitor of vacuolar proteinase B (yscB), probably regulating protease B activity during limited proteolysis. PBI2 is a component of the LMA1 complex, which is involved in the facilitation of vesicle fusion such as homotypic vacuole and ER-derived COPII vesicle fusion with the Golgi. The polypeptide is Protease B inhibitor 2 (PBI2) (Saccharomyces cerevisiae (strain ATCC 204508 / S288c) (Baker's yeast)).